Consider the following 261-residue polypeptide: Ribonuclease HII (261 aa).

Positions K71–S259 constitute an RNase H type-2 domain. A divalent metal cation is bound by residues D77, E78, and D169.

It belongs to the RNase HII family. Mn(2+) serves as cofactor. It depends on Mg(2+) as a cofactor.

Its subcellular location is the cytoplasm. It carries out the reaction Endonucleolytic cleavage to 5'-phosphomonoester.. In terms of biological role, endonuclease that specifically degrades the RNA of RNA-DNA hybrids. The protein is Ribonuclease HII of Listeria monocytogenes serotype 4a (strain HCC23).